The sequence spans 196 residues: MSRYRGPRLKKIRRLGALPGLTRKTPKSGSNLKKKFHSGKKEQYRIRLQEKQKLRFHYGLTERQLLRYVHIAGKAKRSTGQVLLQLLEMRLDNILFRLGMASTIPGARQLVNHRHILVNGRIVNIPSFRCKPRDIITTKDNQRSKGLVQNYIASSDPGKLPKHLTIDTLEYKGLVNKILDRKWVGLKINELLVVEY.

The disordered stretch occupies residues Ala17–Phe36. Residues Met89–Pro157 enclose the S4 RNA-binding domain.

This sequence belongs to the universal ribosomal protein uS4 family. As to quaternary structure, part of the 30S ribosomal subunit. Contacts protein S5. The interaction surface between S4 and S5 is involved in control of translational fidelity.

The protein localises to the plastid. It is found in the chloroplast. Functionally, one of the primary rRNA binding proteins, it binds directly to 16S rRNA where it nucleates assembly of the body of the 30S subunit. In terms of biological role, with S5 and S12 plays an important role in translational accuracy. The sequence is that of Small ribosomal subunit protein uS4c (rps4) from Calamagrostis epigeios (Wood small-reed grass).